The chain runs to 99 residues: NADH-quinone oxidoreductase subunit K (99 aa).

3 consecutive transmembrane segments (helical) span residues 2 to 22 (PVEY…LGVL), 28 to 48 (LILM…FLAF), and 60 to 80 (IAFF…AVVI).

Belongs to the complex I subunit 4L family. NDH-1 is composed of 14 different subunits. Subunits NuoA, H, J, K, L, M, N constitute the membrane sector of the complex.

Its subcellular location is the cell inner membrane. It carries out the reaction a quinone + NADH + 5 H(+)(in) = a quinol + NAD(+) + 4 H(+)(out). In terms of biological role, NDH-1 shuttles electrons from NADH, via FMN and iron-sulfur (Fe-S) centers, to quinones in the respiratory chain. The immediate electron acceptor for the enzyme in this species is believed to be ubiquinone. Couples the redox reaction to proton translocation (for every two electrons transferred, four hydrogen ions are translocated across the cytoplasmic membrane), and thus conserves the redox energy in a proton gradient. The polypeptide is NADH-quinone oxidoreductase subunit K (Anaeromyxobacter dehalogenans (strain 2CP-C)).